A 289-amino-acid chain; its full sequence is UPF0276 protein BP2925 (289 aa).

The protein belongs to the UPF0276 family.

The polypeptide is UPF0276 protein BP2925 (Bordetella pertussis (strain Tohama I / ATCC BAA-589 / NCTC 13251)).